Consider the following 727-residue polypeptide: E3 SUMO-protein ligase pli1 (727 aa).

In terms of domain architecture, SAP spans 18–52; that stretch reads ETGLIIPQLKDILRVFGLRLSGTKAELITRIKQLI. The region spanning 108-261 is the PINIT domain; that stretch reads YSRPFAPVVH…SVVVCFVKVY (154 aa). The SP-RING-type zinc-finger motif lies at 290–371; it reads QDADIIATST…MQHILESTPS (82 aa). 4 residues coordinate Zn(2+): Cys321, His323, Cys344, and Cys347. 2 positions are modified to phosphoserine: Ser395 and Ser396. Disordered regions lie at residues 408–558 and 706–727; these read ELSD…TQHS and QSNN…QSID. Composition is skewed to polar residues over residues 417-435 and 459-494; these read TMAN…THNS and VATS…NRST. Residues 546–558 show a composition bias toward low complexity; it reads SQQNNNNSNTQHS.

This sequence belongs to the PIAS family. Interacts with hus5/ubc9.

Its subcellular location is the nucleus. It functions in the pathway protein modification; protein sumoylation. Acts as an E3 ligase mediating SUMO/Smt3 attachment to other proteins. Involved in the maintenance of the centromere and in telomere length. Regulates recombination, via extension sumoylation, particularly within the heterochromatin repeats. This Schizosaccharomyces pombe (strain 972 / ATCC 24843) (Fission yeast) protein is E3 SUMO-protein ligase pli1 (pli1).